Consider the following 299-residue polypeptide: MSEITSPHRSGSVAVIGRPNVGKSTLTNALVGAKVSIVSNRPQTTRHRLLGIATFPEGQLVLVDTPGLHREQKRAMNRVMNRAARGSLEGVDAAVLVIEAGRWDEEDTLAFRVLSDAGVPVVLVVNKVDRLKDKTALFPFLAQVSEGRTFAAVHPVSALKRKGLDALVGDLLKLVPEAEAMFGEDEITDRSQRFLAGELVREQLMRQLGEELPYATTVEIERFAEDGALLRIGAVIWVEREGQKAIVIGKGGTRLKEIGGKARLQMERLFGAKVFLETWVRVREGWSDDEAALKAFGYE.

Residues 9 to 177 (RSGSVAVIGR…VGDLLKLVPE (169 aa)) enclose the Era-type G domain. The interval 17–24 (GRPNVGKS) is G1. Position 17–24 (17–24 (GRPNVGKS)) interacts with GTP. A G2 region spans residues 43 to 47 (QTTRH). A G3 region spans residues 64–67 (DTPG). Residues 64 to 68 (DTPGL) and 126 to 129 (NKVD) contribute to the GTP site. The interval 126–129 (NKVD) is G4. Residues 156–158 (VSA) are G5. The KH type-2 domain maps to 200–284 (VREQLMRQLG…FLETWVRVRE (85 aa)).

The protein belongs to the TRAFAC class TrmE-Era-EngA-EngB-Septin-like GTPase superfamily. Era GTPase family. In terms of assembly, monomer.

The protein localises to the cytoplasm. It is found in the cell inner membrane. Its function is as follows. An essential GTPase that binds both GDP and GTP, with rapid nucleotide exchange. Plays a role in 16S rRNA processing and 30S ribosomal subunit biogenesis and possibly also in cell cycle regulation and energy metabolism. In Xanthomonas axonopodis pv. citri (strain 306), this protein is GTPase Era.